A 456-amino-acid chain; its full sequence is Adenylosuccinate synthetase isozyme 2 (456 aa).

Positions 1–24 are disordered; that stretch reads MAFAETYPAASSLPNGDCGRPRAR. Residues 39–45 and 67–69 each bind GTP; these read GDEGKGK and GHT. Residue Asp40 is the Proton acceptor of the active site. Residues Asp40 and Gly67 each contribute to the Mg(2+) site. A substrate-binding site is contributed by Asp40. IMP contacts are provided by residues 40–43, 65–68, Thr162, Arg176, Asn255, Thr270, and Arg334; these read DEGK and NAGH. Catalysis depends on His68, which acts as the Proton donor. 330 to 336 is a binding site for substrate; sequence VTTGRKR. GTP contacts are provided by residues Arg336, 362 to 364, and 444 to 447; these read KLD and GVGK.

It belongs to the adenylosuccinate synthetase family. As to quaternary structure, homodimer. Mg(2+) is required as a cofactor.

It is found in the cytoplasm. Its subcellular location is the mitochondrion. The enzyme catalyses IMP + L-aspartate + GTP = N(6)-(1,2-dicarboxyethyl)-AMP + GDP + phosphate + 2 H(+). Its pathway is purine metabolism; AMP biosynthesis via de novo pathway; AMP from IMP: step 1/2. Inhibited competitively by AMP and IMP and non-competitively by fructose 1,6-bisphosphate. Its function is as follows. Plays an important role in the de novo pathway and in the salvage pathway of purine nucleotide biosynthesis. Catalyzes the first committed step in the biosynthesis of AMP from IMP. The polypeptide is Adenylosuccinate synthetase isozyme 2 (Homo sapiens (Human)).